The chain runs to 211 residues: Protein-L-isoaspartate O-methyltransferase 1 (211 aa).

The active site involves S62.

It belongs to the methyltransferase superfamily. L-isoaspartyl/D-aspartyl protein methyltransferase family.

Its subcellular location is the cytoplasm. The catalysed reaction is [protein]-L-isoaspartate + S-adenosyl-L-methionine = [protein]-L-isoaspartate alpha-methyl ester + S-adenosyl-L-homocysteine. Functionally, catalyzes the methyl esterification of L-isoaspartyl residues in peptides and proteins that result from spontaneous decomposition of normal L-aspartyl and L-asparaginyl residues. It plays a role in the repair and/or degradation of damaged proteins. In Shewanella sediminis (strain HAW-EB3), this protein is Protein-L-isoaspartate O-methyltransferase 1.